Here is a 553-residue protein sequence, read N- to C-terminus: Arginine--tRNA ligase (553 aa).

A 'HIGH' region motif is present at residues proline 132–histidine 140.

Belongs to the class-I aminoacyl-tRNA synthetase family. As to quaternary structure, monomer.

The protein resides in the cytoplasm. It carries out the reaction tRNA(Arg) + L-arginine + ATP = L-arginyl-tRNA(Arg) + AMP + diphosphate. This is Arginine--tRNA ligase from Staphylococcus aureus (strain N315).